The sequence spans 25 residues: uncharacterized protein (25 aa).

This is an uncharacterized protein from Archaeoglobus fulgidus (strain ATCC 49558 / DSM 4304 / JCM 9628 / NBRC 100126 / VC-16).